A 147-amino-acid chain; its full sequence is Nucleoside diphosphate kinase (147 aa).

ATP-binding residues include K9, F57, R85, T91, R102, and N112. Catalysis depends on H115, which acts as the Pros-phosphohistidine intermediate.

It belongs to the NDK family. In terms of assembly, homotetramer. It depends on Mg(2+) as a cofactor.

Its subcellular location is the cytoplasm. It carries out the reaction a 2'-deoxyribonucleoside 5'-diphosphate + ATP = a 2'-deoxyribonucleoside 5'-triphosphate + ADP. The catalysed reaction is a ribonucleoside 5'-diphosphate + ATP = a ribonucleoside 5'-triphosphate + ADP. Major role in the synthesis of nucleoside triphosphates other than ATP. The ATP gamma phosphate is transferred to the NDP beta phosphate via a ping-pong mechanism, using a phosphorylated active-site intermediate. In Listeria welshimeri serovar 6b (strain ATCC 35897 / DSM 20650 / CCUG 15529 / CIP 8149 / NCTC 11857 / SLCC 5334 / V8), this protein is Nucleoside diphosphate kinase.